Here is a 132-residue protein sequence, read N- to C-terminus: Small ribosomal subunit protein uS8 (132 aa).

This sequence belongs to the universal ribosomal protein uS8 family. In terms of assembly, part of the 30S ribosomal subunit. Contacts proteins S5 and S12.

One of the primary rRNA binding proteins, it binds directly to 16S rRNA central domain where it helps coordinate assembly of the platform of the 30S subunit. The chain is Small ribosomal subunit protein uS8 from Borreliella burgdorferi (strain ZS7) (Borrelia burgdorferi).